Reading from the N-terminus, the 162-residue chain is uncharacterized protein (162 aa).

A compositionally biased stretch (basic and acidic residues) spans 65–76 (EEKPLEVAQDRN). The tract at residues 65 to 93 (EEKPLEVAQDRNNKRKAPSHLEPAHDFIS) is disordered.

This is an uncharacterized protein from Bacillus subtilis (strain 168).